A 735-amino-acid polypeptide reads, in one-letter code: Transcription factor RFX4 (735 aa).

The interval 25–59 is disordered; the sequence is SESKRFSSHSSIGNISNDENEEKENNRASKPHSTP. Residues 44–126 mediate DNA binding; sequence NEEKENNRAS…RRLGTRGQSK (83 aa). The RFX-type winged-helix DNA-binding region spans 61-136; it reads TLQWLEENYE…YHYYGIAVKE (76 aa). The interval 315–487 is necessary for dimerization; it reads RFSQILKRQT…NELMRAMKGE (173 aa).

It belongs to the RFX family.

It localises to the nucleus. May activate transcription by interacting directly with the X-box. This chain is Transcription factor RFX4 (rfx4), found in Danio rerio (Zebrafish).